Here is a 542-residue protein sequence, read N- to C-terminus: CTP synthase (542 aa).

The tract at residues 1–265 (MARYVFITGG…DSEVLCAFGI (265 aa)) is amidoligase domain. Position 13 (Ser13) interacts with CTP. Ser13 lines the UTP pocket. 14–19 (SLGKGI) contributes to the ATP binding site. Tyr54 is a binding site for L-glutamine. Asp71 serves as a coordination point for ATP. Residues Asp71 and Glu139 each contribute to the Mg(2+) site. Residues 146 to 148 (DIE), 186 to 191 (KTKPTQ), and Lys222 each bind CTP. UTP-binding positions include 186–191 (KTKPTQ) and Lys222. The region spanning 291–541 (TIAVVGKYTG…IEAAVEQSRL (251 aa)) is the Glutamine amidotransferase type-1 domain. Ala353 provides a ligand contact to L-glutamine. Cys380 serves as the catalytic Nucleophile; for glutamine hydrolysis. L-glutamine is bound by residues 381-384 (FGMQ), Glu404, and Arg469. Active-site residues include His514 and Glu516.

It belongs to the CTP synthase family. In terms of assembly, homotetramer.

It carries out the reaction UTP + L-glutamine + ATP + H2O = CTP + L-glutamate + ADP + phosphate + 2 H(+). It catalyses the reaction L-glutamine + H2O = L-glutamate + NH4(+). The enzyme catalyses UTP + NH4(+) + ATP = CTP + ADP + phosphate + 2 H(+). The protein operates within pyrimidine metabolism; CTP biosynthesis via de novo pathway; CTP from UDP: step 2/2. With respect to regulation, allosterically activated by GTP, when glutamine is the substrate; GTP has no effect on the reaction when ammonia is the substrate. The allosteric effector GTP functions by stabilizing the protein conformation that binds the tetrahedral intermediate(s) formed during glutamine hydrolysis. Inhibited by the product CTP, via allosteric rather than competitive inhibition. Functionally, catalyzes the ATP-dependent amination of UTP to CTP with either L-glutamine or ammonia as the source of nitrogen. Regulates intracellular CTP levels through interactions with the four ribonucleotide triphosphates. This is CTP synthase from Bartonella tribocorum (strain CIP 105476 / IBS 506).